The sequence spans 469 residues: MSAPRTLYDKIWDDHLVDEQADGTCLLYIDRHLVHEVTSPQAFEGLRMSGRKVRAPEKTLAVVDHNVPTSPDRHLGIKNEESRIQVEQLAKNAAEFNVEYYSENDKRQGIVHIIGPEQGFTLPGMTIVCGDSHTSTHGAFGSLAHGIGTSEVEHVLATQTLIQKKAKNMLVQVDGQLPAGVTAKDIVLAIIGEIGTAGGTGYVIEYAGEAIRSLSMEGRMTICNMSIEGGARAGLIAPDEITFEYIKGKPRAPKGEALEQAIAYWKTLKSDEGAHFDRVVKLNAAELPPIVSWGSSPEDVVSVQGIVPNPDEIQDETKRASKWRALEYMGLKPGTPMTDINIDRVFIGSCTNGRIEDLRAVANVVEGKTVASTVNAMIVPGSGLVKEQAEAEGLDKIFKAAGFDWREPGCSMCLAMNDDRLKPGERCASTSNRNFEGRQGFKGRTHLVSPAMAAAAAIAGHFVDIREWN.

C350, C410, and C413 together coordinate [4Fe-4S] cluster.

Belongs to the aconitase/IPM isomerase family. LeuC type 1 subfamily. Heterodimer of LeuC and LeuD. [4Fe-4S] cluster serves as cofactor.

The catalysed reaction is (2R,3S)-3-isopropylmalate = (2S)-2-isopropylmalate. The protein operates within amino-acid biosynthesis; L-leucine biosynthesis; L-leucine from 3-methyl-2-oxobutanoate: step 2/4. Functionally, catalyzes the isomerization between 2-isopropylmalate and 3-isopropylmalate, via the formation of 2-isopropylmaleate. The sequence is that of 3-isopropylmalate dehydratase large subunit from Rhizobium etli (strain CIAT 652).